Consider the following 340-residue polypeptide: DNA-directed RNA polymerase subunit alpha (340 aa).

The alpha N-terminal domain (alpha-NTD) stretch occupies residues 1 to 233 (MIQNEIPIPA…NLFIPLLHEK (233 aa)). The interval 263–340 (RKEISFKHIF…LPKNKFSIND (78 aa)) is alpha C-terminal domain (alpha-CTD).

It belongs to the RNA polymerase alpha chain family. In plastids the minimal PEP RNA polymerase catalytic core is composed of four subunits: alpha, beta, beta', and beta''. When a (nuclear-encoded) sigma factor is associated with the core the holoenzyme is formed, which can initiate transcription.

It localises to the plastid. It is found in the chloroplast. The catalysed reaction is RNA(n) + a ribonucleoside 5'-triphosphate = RNA(n+1) + diphosphate. In terms of biological role, DNA-dependent RNA polymerase catalyzes the transcription of DNA into RNA using the four ribonucleoside triphosphates as substrates. The protein is DNA-directed RNA polymerase subunit alpha (rpoA) of Anthoceros angustus (Hornwort).